Reading from the N-terminus, the 286-residue chain is Digeranylgeranylglyceryl phosphate synthase (286 aa).

8 consecutive transmembrane segments (helical) span residues Ala-21–Thr-41, Thr-42–Ile-62, Phe-96–Ala-116, Leu-133–Ala-155, Phe-162–Ile-181, Val-214–Trp-234, Tyr-235–Asp-255, and Arg-266–Ile-286.

The protein belongs to the UbiA prenyltransferase family. DGGGP synthase subfamily. Requires Mg(2+) as cofactor.

The protein resides in the cell membrane. The enzyme catalyses sn-3-O-(geranylgeranyl)glycerol 1-phosphate + (2E,6E,10E)-geranylgeranyl diphosphate = 2,3-bis-O-(geranylgeranyl)-sn-glycerol 1-phosphate + diphosphate. It participates in membrane lipid metabolism; glycerophospholipid metabolism. Functionally, prenyltransferase that catalyzes the transfer of the geranylgeranyl moiety of geranylgeranyl diphosphate (GGPP) to the C2 hydroxyl of (S)-3-O-geranylgeranylglyceryl phosphate (GGGP). This reaction is the second ether-bond-formation step in the biosynthesis of archaeal membrane lipids. This chain is Digeranylgeranylglyceryl phosphate synthase, found in Haloquadratum walsbyi (strain DSM 16790 / HBSQ001).